The following is a 464-amino-acid chain: Argininosuccinate lyase (464 aa).

Belongs to the lyase 1 family. Argininosuccinate lyase subfamily.

It localises to the cytoplasm. It carries out the reaction 2-(N(omega)-L-arginino)succinate = fumarate + L-arginine. It functions in the pathway amino-acid biosynthesis; L-arginine biosynthesis; L-arginine from L-ornithine and carbamoyl phosphate: step 3/3. This is Argininosuccinate lyase from Azotobacter vinelandii (strain DJ / ATCC BAA-1303).